The sequence spans 199 residues: Outer-membrane lipoprotein LolB (199 aa).

Residues 1 to 28 (MSACPAPRSPFRWLHAFTLCLLLAVLAG) form the signal peptide. Residue Cys-29 is the site of N-palmitoyl cysteine attachment. Cys-29 carries the S-diacylglycerol cysteine lipid modification.

The protein belongs to the LolB family. Monomer.

It localises to the cell outer membrane. In terms of biological role, plays a critical role in the incorporation of lipoproteins in the outer membrane after they are released by the LolA protein. This Bordetella bronchiseptica (strain ATCC BAA-588 / NCTC 13252 / RB50) (Alcaligenes bronchisepticus) protein is Outer-membrane lipoprotein LolB.